The sequence spans 203 residues: Tail fiber assembly protein homolog (203 aa).

The protein belongs to the tfa family.

This chain is Tail fiber assembly protein homolog (T), found in Escherichia coli.